We begin with the raw amino-acid sequence, 100 residues long: MVPITYYLLLAAALFCMGMFGVLVRRNALVVFMSVELMLNAANLTFVAFARMRGDNLGHVSAFFVIAVAAAEAAIGLAIVIAVFRSRGSILLEDLRTMKH.

The next 3 helical transmembrane spans lie at 4–24 (ITYY…GVLV), 29–49 (LVVF…FVAF), and 63–83 (FFVI…VIAV).

Belongs to the complex I subunit 4L family. As to quaternary structure, NDH-1 is composed of 14 different subunits. Subunits NuoA, H, J, K, L, M, N constitute the membrane sector of the complex.

The protein localises to the cell inner membrane. The catalysed reaction is a quinone + NADH + 5 H(+)(in) = a quinol + NAD(+) + 4 H(+)(out). Its function is as follows. NDH-1 shuttles electrons from NADH, via FMN and iron-sulfur (Fe-S) centers, to quinones in the respiratory chain. The immediate electron acceptor for the enzyme in this species is believed to be ubiquinone. Couples the redox reaction to proton translocation (for every two electrons transferred, four hydrogen ions are translocated across the cytoplasmic membrane), and thus conserves the redox energy in a proton gradient. This is NADH-quinone oxidoreductase subunit K from Myxococcus xanthus (strain DK1622).